The chain runs to 305 residues: Homeobox protein ceh-23 (305 aa).

2 disordered regions span residues 113-140 (ASCP…ERRR) and 262-305 (RRSK…KVLN). Polar residues predominate over residues 120–135 (ASSQATVTLQVPSTGS). Positions 211 to 270 (HRKARTIYGTTQTQQLEDMFKGQMYVVGAERENLAQRLGLSPSQVRIWFQNRRSKHRRKQ) form a DNA-binding region, homeobox. Over residues 287-305 (GKDEEEDDEEDEDDVKVLN) the composition is skewed to acidic residues.

Belongs to the distal-less homeobox family.

It localises to the nucleus. Its function is as follows. Probable transcription factor. Required for differentiation of AIY interneurons, acting downstream of LIM/homeobox protein ttx-3. Modulates gene expression, acting downstream of AMP kinase aak-2/AMPK signaling. Modulates lifespan. This chain is Homeobox protein ceh-23 (ceh-23), found in Caenorhabditis elegans.